A 540-amino-acid polypeptide reads, in one-letter code: Chaperonin GroEL 3 (540 aa).

Residues Thr-30 to Pro-33, Lys-51, Asp-87 to Thr-91, Gly-415, Asn-480 to Ala-482, and Asp-496 contribute to the ATP site.

The protein belongs to the chaperonin (HSP60) family. As to quaternary structure, forms a cylinder of 14 subunits composed of two heptameric rings stacked back-to-back. Interacts with the co-chaperonin GroES.

It is found in the cytoplasm. The catalysed reaction is ATP + H2O + a folded polypeptide = ADP + phosphate + an unfolded polypeptide.. In terms of biological role, together with its co-chaperonin GroES, plays an essential role in assisting protein folding. The GroEL-GroES system forms a nano-cage that allows encapsulation of the non-native substrate proteins and provides a physical environment optimized to promote and accelerate protein folding. The chain is Chaperonin GroEL 3 from Bradyrhizobium sp. (strain BTAi1 / ATCC BAA-1182).